Here is a 249-residue protein sequence, read N- to C-terminus: Tryptophan synthase alpha chain (249 aa).

Residues E43 and D54 each act as proton acceptor in the active site.

This sequence belongs to the TrpA family. Tetramer of two alpha and two beta chains.

The enzyme catalyses (1S,2R)-1-C-(indol-3-yl)glycerol 3-phosphate + L-serine = D-glyceraldehyde 3-phosphate + L-tryptophan + H2O. It participates in amino-acid biosynthesis; L-tryptophan biosynthesis; L-tryptophan from chorismate: step 5/5. In terms of biological role, the alpha subunit is responsible for the aldol cleavage of indoleglycerol phosphate to indole and glyceraldehyde 3-phosphate. This Campylobacter jejuni subsp. doylei (strain ATCC BAA-1458 / RM4099 / 269.97) protein is Tryptophan synthase alpha chain.